The primary structure comprises 115 residues: Large ribosomal subunit protein bL19 (115 aa).

This sequence belongs to the bacterial ribosomal protein bL19 family.

Functionally, this protein is located at the 30S-50S ribosomal subunit interface and may play a role in the structure and function of the aminoacyl-tRNA binding site. The sequence is that of Large ribosomal subunit protein bL19 from Buchnera aphidicola subsp. Acyrthosiphon pisum (strain 5A).